The primary structure comprises 216 residues: Ribosome maturation factor RimP (216 aa).

This sequence belongs to the RimP family.

The protein resides in the cytoplasm. Functionally, required for maturation of 30S ribosomal subunits. The sequence is that of Ribosome maturation factor RimP from Bartonella quintana (strain Toulouse) (Rochalimaea quintana).